The following is a 96-amino-acid chain: Cytochrome oxidase assembly factor 4 (96 aa).

A CHCH domain is found at 36 to 77 (KTGCYVENLALQLCHAETGDWRQCFNEMALFRKCWEKNGNRE). Short sequence motifs (cx9C motif) lie at residues 39-49 (CYVENLALQLC) and 59-69 (CFNEMALFRKC). 2 disulfides stabilise this stretch: C39/C69 and C49/C59.

It belongs to the COA4 family.

The protein resides in the mitochondrion inner membrane. It localises to the mitochondrion intermembrane space. Its function is as follows. Involved in cytochrome c oxidase assembly or stability. The chain is Cytochrome oxidase assembly factor 4 (COA4) from Saccharomyces cerevisiae (strain ATCC 204508 / S288c) (Baker's yeast).